The following is a 334-amino-acid chain: Probable allantoicase (334 aa).

This sequence belongs to the allantoicase family.

The catalysed reaction is allantoate + H2O = (S)-ureidoglycolate + urea. It participates in nitrogen metabolism; (S)-allantoin degradation; (S)-ureidoglycolate from allantoate (aminidohydrolase route): step 1/1. The protein is Probable allantoicase of Acinetobacter baylyi (strain ATCC 33305 / BD413 / ADP1).